A 1065-amino-acid polypeptide reads, in one-letter code: Pumilio domain-containing protein P35G2.14 (1065 aa).

Disordered regions lie at residues 1–78 (MHQD…SLRS), 130–265 (ITSK…PWSP), and 422–573 (TTGF…NTNS). Residues 16–44 (RNTISKPSNNNPPLDMSSLNNDFGQQLDS) show a composition bias toward polar residues. A compositionally biased stretch (low complexity) spans 59–77 (NPSSNFNDSNRSNISSSLR). 2 stretches are compositionally biased toward polar residues: residues 134 to 151 (LQNN…RGRT) and 169 to 189 (SSVS…HFNP). 2 stretches are compositionally biased toward low complexity: residues 190-224 (SSSS…SEII) and 236-246 (SASNAANSGSN). Polar residues-rich tracts occupy residues 247–262 (TIRA…NTLP) and 434–455 (GLNT…TFEV). Thr-260 carries the post-translational modification Phosphothreonine. A compositionally biased stretch (low complexity) spans 470–483 (PLGSLSSRPKPSSS). Polar residues-rich tracts occupy residues 495 to 522 (LKTS…SSSP) and 529 to 551 (IHNQ…NGLR). 3 positions are modified to phosphoserine: Ser-506, Ser-511, and Ser-515. Thr-554 carries the post-translational modification Phosphothreonine. A compositionally biased stretch (low complexity) spans 559–573 (NISTRSSSESNNTNS). Positions 592 to 666 (HALWVGNLPS…DPVCISFAKV (75 aa)) constitute an RRM domain. Residues 712–1065 (DLSKIYQILN…ELKKLAEVCA (354 aa)) form the PUM-HD domain. Pumilio repeat units follow at residues 771–808 (AINW…MMLE), 809–844 (RIAP…RLIA), 846–884 (HLQP…AILN), 886–917 (FWVI…VLVA), 919–954 (AITV…ILLT), and 956–993 (RFVQ…LVVD).

It is found in the cytoplasm. The sequence is that of Pumilio domain-containing protein P35G2.14 from Schizosaccharomyces pombe (strain 972 / ATCC 24843) (Fission yeast).